The chain runs to 267 residues: Probable membrane transporter protein MJ0441 (267 aa).

A run of 7 helical transmembrane segments spans residues 10–30 (LLLL…GSLF), 31–51 (GIGG…YFGI), 55–75 (VKFA…ISIF), 87–107 (ASIT…FLVV), 158–178 (FLSG…LAMA), 185–205 (AVAI…ISYL), and 213–233 (IYNI…PIIY).

The protein belongs to the 4-toluene sulfonate uptake permease (TSUP) (TC 2.A.102) family.

The protein localises to the cell membrane. This Methanocaldococcus jannaschii (strain ATCC 43067 / DSM 2661 / JAL-1 / JCM 10045 / NBRC 100440) (Methanococcus jannaschii) protein is Probable membrane transporter protein MJ0441.